We begin with the raw amino-acid sequence, 130 residues long: Small ribosomal subunit protein uS11c (130 aa).

Belongs to the universal ribosomal protein uS11 family. In terms of assembly, part of the 30S ribosomal subunit.

It localises to the plastid. Its subcellular location is the chloroplast. In Tetradesmus obliquus (Green alga), this protein is Small ribosomal subunit protein uS11c.